The sequence spans 330 residues: G-protein coupled bile acid receptor 1 (330 aa).

At 1-19 the chain is on the extracellular side; sequence MTPNSTGEVPSPIPKGALG. Asn-4 is a glycosylation site (N-linked (GlcNAc...) asparagine). A helical membrane pass occupies residues 20-40; sequence LSLALASLIITANLLLALGIA. Residues 41-50 are Cytoplasmic-facing; that stretch reads WDRRLRSPPA. A helical transmembrane segment spans residues 51 to 71; sequence GCFFLSLLLAGLLTGLALPTL. The Extracellular segment spans residues 72–85; sequence PGLWNQSRRGYWSC. N-linked (GlcNAc...) asparagine glycosylation occurs at Asn-76. The cysteines at positions 85 and 155 are disulfide-linked. The helical transmembrane segment at 86 to 106 threads the bilayer; the sequence is LLVYLAPNFSFLSLLANLLLV. At 107-125 the chain is on the cytoplasmic side; the sequence is HGERYMAVLRPLQPPGSIR. The chain crosses the membrane as a helical span at residues 126–146; the sequence is LALLLTWAGPLLFASLPALGW. Topologically, residues 147-165 are extracellular; sequence NHWTPGANCSSQAIFPAPY. A helical membrane pass occupies residues 166-186; sequence LYLEVYGLLLPAVGAAAFLSV. Over 187–228 the chain is Cytoplasmic; it reads RVLATAHRQLQDICRLERAVCRDEPSALARALTWRQARAQAG. The helical transmembrane segment at 229–249 threads the bilayer; the sequence is AMLLFGLCWGPYVATLLLSVL. Topologically, residues 250–261 are extracellular; the sequence is AYEQRPPLGPGT. Residues 262–282 form a helical membrane-spanning segment; sequence LLSLLSLGSASAAAVPVAMGL. Residues 283-330 are Cytoplasmic-facing; it reads GDQRYTAPWRAAAQRCLQGLWGRASRDSPGPSIAYHPSSQSSVDLDLN. The disordered stretch occupies residues 309–330; the sequence is DSPGPSIAYHPSSQSSVDLDLN. Over residues 319-330 the composition is skewed to polar residues; the sequence is PSSQSSVDLDLN.

The protein belongs to the G-protein coupled receptor 1 family. Ubiquitously expressed. Expressed at higher level in spleen and placenta. Expressed at lower level in other tissues. In digestive tissues, it is expressed in stomach, duodenum, ileocecum, ileum, jejunum, ascending colon, transverse colon, descending colon, cecum and liver, but not in esophagus and rectum.

The protein resides in the cell membrane. In terms of biological role, receptor for bile acid. Bile acid-binding induces its internalization, activation of extracellular signal-regulated kinase and intracellular cAMP production. May be involved in the suppression of macrophage functions by bile acids. This is G-protein coupled bile acid receptor 1 (GPBAR1) from Homo sapiens (Human).